The following is a 245-amino-acid chain: 1-(5-phosphoribosyl)-5-[(5-phosphoribosylamino)methylideneamino] imidazole-4-carboxamide isomerase (245 aa).

Residue aspartate 15 is the Proton acceptor of the active site. Aspartate 135 acts as the Proton donor in catalysis.

It belongs to the HisA/HisF family.

The protein resides in the cytoplasm. It carries out the reaction 1-(5-phospho-beta-D-ribosyl)-5-[(5-phospho-beta-D-ribosylamino)methylideneamino]imidazole-4-carboxamide = 5-[(5-phospho-1-deoxy-D-ribulos-1-ylimino)methylamino]-1-(5-phospho-beta-D-ribosyl)imidazole-4-carboxamide. Its pathway is amino-acid biosynthesis; L-histidine biosynthesis; L-histidine from 5-phospho-alpha-D-ribose 1-diphosphate: step 4/9. This chain is 1-(5-phosphoribosyl)-5-[(5-phosphoribosylamino)methylideneamino] imidazole-4-carboxamide isomerase, found in Haloquadratum walsbyi (strain DSM 16790 / HBSQ001).